The primary structure comprises 142 residues: Ribosome-binding factor A (142 aa).

Residues 118-130 are compositionally biased toward basic and acidic residues; the sequence is DKAKQKQAGREDD. Residues 118 to 142 form a disordered region; that stretch reads DKAKQKQAGREDDTPSVDEQEKDTD. Acidic residues predominate over residues 131-142; it reads TPSVDEQEKDTD.

It belongs to the RbfA family. In terms of assembly, monomer. Binds 30S ribosomal subunits, but not 50S ribosomal subunits or 70S ribosomes.

The protein resides in the cytoplasm. In terms of biological role, one of several proteins that assist in the late maturation steps of the functional core of the 30S ribosomal subunit. Associates with free 30S ribosomal subunits (but not with 30S subunits that are part of 70S ribosomes or polysomes). Required for efficient processing of 16S rRNA. May interact with the 5'-terminal helix region of 16S rRNA. In Shewanella denitrificans (strain OS217 / ATCC BAA-1090 / DSM 15013), this protein is Ribosome-binding factor A.